Consider the following 289-residue polypeptide: Glycine--tRNA ligase alpha subunit (289 aa).

This sequence belongs to the class-II aminoacyl-tRNA synthetase family. As to quaternary structure, tetramer of two alpha and two beta subunits.

It is found in the cytoplasm. It carries out the reaction tRNA(Gly) + glycine + ATP = glycyl-tRNA(Gly) + AMP + diphosphate. The sequence is that of Glycine--tRNA ligase alpha subunit from Prochlorococcus marinus subsp. pastoris (strain CCMP1986 / NIES-2087 / MED4).